The chain runs to 603 residues: Pyruvate decarboxylase 4 (603 aa).

The substrate site is built by Asp65 and His152. The thiamine pyrophosphate binding stretch occupies residues 430-512 (DSWFNCQKLK…FLINNGGYTI (83 aa)). Residues Asp480, Asn507, and Gly509 each coordinate Mg(2+). Glu513 is a substrate binding site.

The protein belongs to the TPP enzyme family. In terms of assembly, homotetramer. A metal cation is required as a cofactor. The cofactor is thiamine diphosphate. As to expression, expressed in shoots and at lowe levels in roots, flowers and siliques.

The enzyme catalyses a 2-oxocarboxylate + H(+) = an aldehyde + CO2. In Arabidopsis thaliana (Mouse-ear cress), this protein is Pyruvate decarboxylase 4 (PDC4).